Reading from the N-terminus, the 96-residue chain is Dynein light chain roadblock-type 2 (96 aa).

Ala-2 is modified (N-acetylalanine).

It belongs to the GAMAD family. As to quaternary structure, homodimer. The cytoplasmic dynein 1 complex consists of two catalytic heavy chains (HCs) and a number of non-catalytic subunits presented by intermediate chains (ICs), light intermediate chains (LICs) and light chains (LCs); the composition seems to vary in respect to the IC, LIC and LC composition. The heavy chain homodimer serves as a scaffold for the probable homodimeric assembly of the respective non-catalytic subunits. The ICs and LICs bind directly to the HC dimer and the LCs assemble on the IC dimer. Interacts with DYNC1I1 and DYNC1I2. Self-associates. Interacts with DYNLRB1.

It localises to the cytoplasm. The protein resides in the cytoskeleton. Its function is as follows. Acts as one of several non-catalytic accessory components of the cytoplasmic dynein 1 complex that are thought to be involved in linking dynein to cargos and to adapter proteins that regulate dynein function. Cytoplasmic dynein 1 acts as a motor for the intracellular retrograde motility of vesicles and organelles along microtubules. The chain is Dynein light chain roadblock-type 2 (DYNLRB2) from Bos taurus (Bovine).